The chain runs to 219 residues: 7-cyano-7-deazaguanine synthase (219 aa).

Phe10–Leu20 is a binding site for ATP. Zn(2+) contacts are provided by Cys188, Cys196, Cys199, and Cys202.

This sequence belongs to the QueC family. Requires Zn(2+) as cofactor.

The enzyme catalyses 7-carboxy-7-deazaguanine + NH4(+) + ATP = 7-cyano-7-deazaguanine + ADP + phosphate + H2O + H(+). Its pathway is purine metabolism; 7-cyano-7-deazaguanine biosynthesis. In terms of biological role, catalyzes the ATP-dependent conversion of 7-carboxy-7-deazaguanine (CDG) to 7-cyano-7-deazaguanine (preQ(0)). The chain is 7-cyano-7-deazaguanine synthase from Neisseria meningitidis serogroup B (strain ATCC BAA-335 / MC58).